We begin with the raw amino-acid sequence, 295 residues long: Diaminopimelate epimerase (295 aa).

Residues N11 and N67 each coordinate substrate. C76 functions as the Proton donor in the catalytic mechanism. Substrate-binding positions include 77–78 (GN), N171, N210, and 228–229 (ER). The active-site Proton acceptor is C237. 238–239 (GT) is a binding site for substrate.

Belongs to the diaminopimelate epimerase family. As to quaternary structure, homodimer.

The protein resides in the cytoplasm. The catalysed reaction is (2S,6S)-2,6-diaminopimelate = meso-2,6-diaminopimelate. It functions in the pathway amino-acid biosynthesis; L-lysine biosynthesis via DAP pathway; DL-2,6-diaminopimelate from LL-2,6-diaminopimelate: step 1/1. Catalyzes the stereoinversion of LL-2,6-diaminopimelate (L,L-DAP) to meso-diaminopimelate (meso-DAP), a precursor of L-lysine. The protein is Diaminopimelate epimerase of Methanocaldococcus jannaschii (strain ATCC 43067 / DSM 2661 / JAL-1 / JCM 10045 / NBRC 100440) (Methanococcus jannaschii).